A 25-amino-acid polypeptide reads, in one-letter code: Small ribosomal subunit protein eS32B (25 aa).

A disordered region spans residues 1–25 (MRAKWRKKRTRRLKRKRRKVRARSK).

The protein belongs to the eukaryotic ribosomal protein eS32 family. Component of the small ribosomal subunit (SSU). Mature yeast ribosomes consist of a small (40S) and a large (60S) subunit. The 40S small subunit contains 1 molecule of ribosomal RNA (18S rRNA) and 33 different proteins (encoded by 57 genes). The large 60S subunit contains 3 rRNA molecules (25S, 5.8S and 5S rRNA) and 46 different proteins (encoded by 81 genes).

It localises to the cytoplasm. Its function is as follows. Component of the ribosome, a large ribonucleoprotein complex responsible for the synthesis of proteins in the cell. The small ribosomal subunit (SSU) binds messenger RNAs (mRNAs) and translates the encoded message by selecting cognate aminoacyl-transfer RNA (tRNA) molecules. The large subunit (LSU) contains the ribosomal catalytic site termed the peptidyl transferase center (PTC), which catalyzes the formation of peptide bonds, thereby polymerizing the amino acids delivered by tRNAs into a polypeptide chain. The nascent polypeptides leave the ribosome through a tunnel in the LSU and interact with protein factors that function in enzymatic processing, targeting, and the membrane insertion of nascent chains at the exit of the ribosomal tunnel. The chain is Small ribosomal subunit protein eS32B from Saccharomyces cerevisiae (strain ATCC 204508 / S288c) (Baker's yeast).